A 124-amino-acid polypeptide reads, in one-letter code: CBS domain-containing protein MJ0729 (124 aa).

CBS domains follow at residues 10 to 67 (MNKD…IEDL) and 70 to 124 (LIDE…YKNR).

As to quaternary structure, exhibits a pH-dependent oligomerization state: at pH 7, the dominant species is a dimer, where each monomer is a two-CBS domain protein, and at pH 4.5-4.8, the dominant species is a tetramer, with an oblong shape. At pH 2.5, there is formation of intermolecular hydrogen bonds, suggesting the presence of high-molecular weight species. The physiological dimeric species is thermal and chemically very stable.

The sequence is that of CBS domain-containing protein MJ0729 from Methanocaldococcus jannaschii (strain ATCC 43067 / DSM 2661 / JAL-1 / JCM 10045 / NBRC 100440) (Methanococcus jannaschii).